The following is a 510-amino-acid chain: MRALLSVSDKEGIVEFGKELENLGFEILSTGGTFKLLKENGVKVIEVSDFTKSPELFEGRVKTLHPKIHGGILHKRNDENHIKQAKENEILGIDLVCVNLYPFKKTTIMSDDFDEIIENIDIGGPAMIRSAAKNYKDVMVLCDRLDYEKVIETLKKNQNDENFRLSLMIKAYEYTANYDAYIANYMNERFNGGFGASKFIVGQKVFDTKYGENPHQKGALYEFDAFFSANFKALKGEASFNNLTDINAALNLASSFDKAPAIAIVKHGNSCGFAIKENLVQSYIHALKSDSVSAYGGVVAINGTLDEALANKINEIYVEVIIAANVDEKALAVFEGKKRIKIFTQESPFLIRSFDKYDFKHIDGGFVYQNSDEADEDELKNAKLMSQREASKEELKDLEIAMKIAAFTKSNNVVYVKNGAMVAIGMGMTSRIDAAKAATFKAKEMGLDLQGCVLASEAFFPFRDSIDEASKVGVKAIVEPGGSIRDDEVVKAADEYGMALYFTGVRHFLH.

Positions 1-142 constitute an MGS-like domain; that stretch reads MRALLSVSDK…KNYKDVMVLC (142 aa).

This sequence belongs to the PurH family.

The enzyme catalyses (6R)-10-formyltetrahydrofolate + 5-amino-1-(5-phospho-beta-D-ribosyl)imidazole-4-carboxamide = 5-formamido-1-(5-phospho-D-ribosyl)imidazole-4-carboxamide + (6S)-5,6,7,8-tetrahydrofolate. It catalyses the reaction IMP + H2O = 5-formamido-1-(5-phospho-D-ribosyl)imidazole-4-carboxamide. It functions in the pathway purine metabolism; IMP biosynthesis via de novo pathway; 5-formamido-1-(5-phospho-D-ribosyl)imidazole-4-carboxamide from 5-amino-1-(5-phospho-D-ribosyl)imidazole-4-carboxamide (10-formyl THF route): step 1/1. Its pathway is purine metabolism; IMP biosynthesis via de novo pathway; IMP from 5-formamido-1-(5-phospho-D-ribosyl)imidazole-4-carboxamide: step 1/1. This chain is Bifunctional purine biosynthesis protein PurH, found in Campylobacter jejuni subsp. doylei (strain ATCC BAA-1458 / RM4099 / 269.97).